Consider the following 95-residue polypeptide: Co-chaperonin GroES (95 aa).

This sequence belongs to the GroES chaperonin family. Heptamer of 7 subunits arranged in a ring. Interacts with the chaperonin GroEL.

The protein resides in the cytoplasm. Its function is as follows. Together with the chaperonin GroEL, plays an essential role in assisting protein folding. The GroEL-GroES system forms a nano-cage that allows encapsulation of the non-native substrate proteins and provides a physical environment optimized to promote and accelerate protein folding. GroES binds to the apical surface of the GroEL ring, thereby capping the opening of the GroEL channel. The protein is Co-chaperonin GroES of Vesicomyosocius okutanii subsp. Calyptogena okutanii (strain HA).